Reading from the N-terminus, the 245-residue chain is Derlin-1 (245 aa).

Over 1 to 5 (MDLEN) the chain is Cytoplasmic. A helical membrane pass occupies residues 6-26 (FLLGIPIVTRYWFLASTIIPL). The Lumenal portion of the chain corresponds to 27–57 (LGRFGFINVQWMFLQWDLVVNKFQFWRPLTA). A helical transmembrane segment spans residues 58–78 (LIYYPVTPQTGFHWLMMCYFL). At 79–100 (YNYSKALESETYRGRSADYLFM) the chain is on the cytoplasmic side. The chain crosses the membrane as a helical span at residues 101-121 (LIFNWFFCSGLCMALDIYFLL). Over 122–166 (EPMVISVLYVWCQVNKDTIVSFWFGMRFPARYLPWVLWGFNAVLR) the chain is Lumenal. A helical transmembrane segment spans residues 167-187 (GGGTNELVGILVGHAYFFVAL). At 188–245 (KYPDEYGVDLISTPEFLHRLIPDEDGGIHGQDGNIRGARQQPRGHQWPGGVGARLGGN) the chain is on the cytoplasmic side. The interval 218-245 (QDGNIRGARQQPRGHQWPGGVGARLGGN) is disordered. Residues 234–245 (WPGGVGARLGGN) show a composition bias toward gly residues.

Belongs to the derlin family.

The protein localises to the endoplasmic reticulum membrane. Functionally, specifically required for the degradation process of misfolded endoplasmic reticulum (ER) luminal proteins. Participates in the transfer of misfolded proteins from the ER to the cytosol, where they are destroyed by the proteasome in a ubiquitin-dependent manner. This Caenorhabditis elegans protein is Derlin-1.